A 410-amino-acid polypeptide reads, in one-letter code: Transcription factor E2F4 (410 aa).

A disordered region spans residues 1-20 (MAEAGPQAPPPPGTPSRHEK). An N-acetylalanine modification is found at Ala2. Residues 16 to 85 (SRHEKSLGLL…KNSIQWKGVG (70 aa)) mediate DNA binding. The tract at residues 43–65 (LKLAADTLAVRQKRRIYDITNVL) is leucine-zipper. The short motif at 48-85 (DTLAVRQKRRIYDITNVLEGIGLIEKKSKNSIQWKGVG) is the DEF box element. The interval 86–181 (PGCNTREIAD…GLNGQKKYQI (96 aa)) is dimerization. 2 disordered regions span residues 203-258 (PPVA…GSTQ) and 303-341 (SALLDSSSSSSSSSSSSSSSSSGPNPSTSFEPIKADPTG). 2 stretches are compositionally biased toward low complexity: residues 231–252 (PALAQPQESSPPSSPQLTTPTP) and 308–324 (SSSSSSSSSSSSSSSSS). A transactivation region spans residues 334 to 410 (PIKADPTGVL…DLFDVPVLKL (77 aa)). Ser381 carries the post-translational modification Phosphoserine. The HCFC1-binding-motif (HBM) signature appears at 386-389 (DHDY). Residues 387-404 (HDYIYNLDESEGVCDLFD) are interaction with RBL1 and RBL2.

The protein belongs to the E2F/DP family. Component of the DRTF1/E2F transcription factor complex. Binds cooperatively with TFDP1/Dp-1 to E2F sites. The E2F4/TFDP1 dimer interacts preferentially with pocket protein RBL1, which inhibits the E2F transactivation domain. Lower affinity interaction has been found with retinoblastoma protein RB1. Interacts with TRRAP, which probably mediates its interaction with histone acetyltransferase complexes, leading to transcription activation. Interacts with HCFC1. Component of the DREAM complex (also named LINC complex) at least composed of E2F4, E2F5, LIN9, LIN37, LIN52, LIN54, MYBL1, MYBL2, RBL1, RBL2, RBBP4, TFDP1 and TFDP2. The complex exists in quiescent cells where it represses cell cycle-dependent genes. It dissociates in S phase when LIN9, LIN37, LIN52 and LIN54 form a subcomplex that binds to MYBL2. Interacts with PML. Interacts with CEBPA (when phosphorylated). Differentially phosphorylated in vivo.

The protein localises to the nucleus. Its function is as follows. Transcription activator that binds DNA cooperatively with DP proteins through the E2 recognition site, 5'-TTTC[CG]CGC-3' found in the promoter region of a number of genes whose products are involved in cell cycle regulation or in DNA replication. The DRTF1/E2F complex functions in the control of cell-cycle progression from G1 to S phase. E2F4 binds with high affinity to RBL1 and RBL2. In some instances can also bind RB1. Specifically required for multiciliate cell differentiation: together with MCIDAS and E2F5, binds and activate genes required for centriole biogenesis. The protein is Transcription factor E2F4 (E2f4) of Mus musculus (Mouse).